We begin with the raw amino-acid sequence, 88 residues long: Small ribosomal subunit protein bS20 (88 aa).

The segment at 1–20 (MANHKSAEKRARQTIKRTER) is disordered.

Belongs to the bacterial ribosomal protein bS20 family.

Functionally, binds directly to 16S ribosomal RNA. The polypeptide is Small ribosomal subunit protein bS20 (Campylobacter fetus subsp. fetus (strain 82-40)).